The following is a 314-amino-acid chain: Homeobox protein knotted-1-like 3 (314 aa).

Positions 218–238 constitute an ELK domain; it reads ELKIELKQGFKSRIEDVREEI. Residues 239–302 constitute a DNA-binding region (homeobox; TALE-type); the sequence is LRKRRAGKLP…NQRKRNWHNN (64 aa).

This sequence belongs to the TALE/KNOX homeobox family. Isoform 1 is expressed in roots and flowers, and at lower levels in leaf blades and leaf sheaths. Isoform 2 is expressed in roots and flowers.

The protein localises to the nucleus. This is Homeobox protein knotted-1-like 3 (HOS66) from Oryza sativa subsp. japonica (Rice).